The sequence spans 464 residues: Rab GDP-dissociation inhibitor (464 aa).

This sequence belongs to the Rab GDI family. Interacts with the GDP-bound form of Rab GTPase YPT7.

Regulates the GDP/GTP exchange reaction of YPT7 by inhibiting the dissociation of GDP from it, and the subsequent binding of GTP to YTP7. The chain is Rab GDP-dissociation inhibitor (GDI1) from Pyricularia oryzae (strain 70-15 / ATCC MYA-4617 / FGSC 8958) (Rice blast fungus).